The following is a 608-amino-acid chain: RAS guanyl-releasing protein 2 (608 aa).

Residues 4–126 (TLDLDKGCTV…SLIDIENVPT (123 aa)) form the N-terminal Ras-GEF domain. A phosphoserine mark is found at serine 116, serine 117, and serine 147. The region spanning 154 to 387 (EPLELAAHLT…YQLSLQREPR (234 aa)) is the Ras-GEF domain. Residues 382–407 (LQREPRSKSSPTSPTTCTPPPRPPVL) are disordered. EF-hand domains lie at 426 to 461 (HIEK…FPYL) and 463 to 490 (AFGD…SSSM). Aspartate 439, aspartate 441, aspartate 443, histidine 445, glutamate 450, aspartate 468, asparagine 470, aspartate 472, cysteine 474, and glutamate 479 together coordinate Ca(2+). The Phorbol-ester/DAG-type zinc finger occupies 498–548 (VHNFHESNSLRPVACRHCKALILGIYKQGLKCRACGVNCHKQCKDRLSVEC). Phosphoserine occurs at positions 554 and 575. The tract at residues 556 to 591 (SLEGSAPSPSPTHTHHRAFSFSLPRPGRRGSRPPEI) is disordered.

This sequence belongs to the RASGRP family. Forms a signaling complex with RAP1 and BRAF. Interacts with RAP1. Interacts with F-actin.

It is found in the cytoplasm. It localises to the cytosol. The protein localises to the cell membrane. Its subcellular location is the synapse. The protein resides in the synaptosome. It is found in the cell projection. It localises to the ruffle membrane. Functionally, functions as a calcium- and DAG-regulated nucleotide exchange factor specifically activating Rap through the exchange of bound GDP for GTP. May also activate other GTPases such as RRAS, RRAS2, NRAS, KRAS but not HRAS. Functions in aggregation of platelets and adhesion of T-lymphocytes and neutrophils probably through inside-out integrin activation. May function in the muscarinic acetylcholine receptor M1/CHRM1 signaling pathway. This is RAS guanyl-releasing protein 2 (RASGRP2) from Bos taurus (Bovine).